The sequence spans 873 residues: Protein translocase subunit SecA (873 aa).

Residues glutamine 88, glycine 106–threonine 110, and aspartate 501 contribute to the ATP site. Cysteine 856, cysteine 858, cysteine 867, and histidine 868 together coordinate Zn(2+).

The protein belongs to the SecA family. As to quaternary structure, monomer and homodimer. Part of the essential Sec protein translocation apparatus which comprises SecA, SecYEG and auxiliary proteins SecDF-YajC and YidC. It depends on Zn(2+) as a cofactor.

The protein resides in the cell inner membrane. It is found in the cytoplasm. The catalysed reaction is ATP + H2O + cellular proteinSide 1 = ADP + phosphate + cellular proteinSide 2.. Part of the Sec protein translocase complex. Interacts with the SecYEG preprotein conducting channel. Has a central role in coupling the hydrolysis of ATP to the transfer of proteins into and across the cell membrane, serving both as a receptor for the preprotein-SecB complex and as an ATP-driven molecular motor driving the stepwise translocation of polypeptide chains across the membrane. The protein is Protein translocase subunit SecA of Anaplasma phagocytophilum (strain HZ).